The primary structure comprises 349 residues: Phosphoribosylformylglycinamidine cyclo-ligase (349 aa).

Belongs to the AIR synthase family.

It localises to the cytoplasm. It catalyses the reaction 2-formamido-N(1)-(5-O-phospho-beta-D-ribosyl)acetamidine + ATP = 5-amino-1-(5-phospho-beta-D-ribosyl)imidazole + ADP + phosphate + H(+). It participates in purine metabolism; IMP biosynthesis via de novo pathway; 5-amino-1-(5-phospho-D-ribosyl)imidazole from N(2)-formyl-N(1)-(5-phospho-D-ribosyl)glycinamide: step 2/2. The sequence is that of Phosphoribosylformylglycinamidine cyclo-ligase from Methanococcus maripaludis (strain DSM 14266 / JCM 13030 / NBRC 101832 / S2 / LL).